The sequence spans 342 residues: Ferredoxin--NADP reductase (342 aa).

FAD is bound by residues C17, D36, Q44, Y49, I89, F124, D289, and T330.

The protein belongs to the ferredoxin--NADP reductase type 2 family. As to quaternary structure, homodimer. FAD is required as a cofactor.

It catalyses the reaction 2 reduced [2Fe-2S]-[ferredoxin] + NADP(+) + H(+) = 2 oxidized [2Fe-2S]-[ferredoxin] + NADPH. The polypeptide is Ferredoxin--NADP reductase (Rhodopseudomonas palustris (strain BisA53)).